We begin with the raw amino-acid sequence, 411 residues long: Snake venom metalloproteinase ACLF (411 aa).

Residues 1-20 (MIQVLLVTLCLAAFPYQGSS) form the signal peptide. Residues 21-189 (IILESGNVND…KKAFQLNLTP (169 aa)) constitute a propeptide that is removed on maturation. Residues 197–393 (RYVELVIVAD…NNPQCILNKP (197 aa)) form the Peptidase M12B domain. Residues E200 and D284 each contribute to the Ca(2+) site. Cystine bridges form between C308-C388, C348-C372, and C350-C355. Residue H333 coordinates Zn(2+). E334 is a catalytic residue. 2 residues coordinate Zn(2+): H337 and H343. The Ca(2+) site is built by C388, N391, V403, N406, L408, and E410.

This sequence belongs to the venom metalloproteinase (M12B) family. P-I subfamily. As to quaternary structure, monomer. It depends on Zn(2+) as a cofactor. Expressed by the venom gland.

Its subcellular location is the secreted. Its activity is regulated as follows. Inhibited by EDTA and 1,10-phenanthroline, but not by PMSF. Snake venom zinc metalloprotease that has fibrinolytic activity. The recombinant enzyme cleaves both alpha- and beta-chains of fibrinogen, but not the gamma-chain. The recombinant protein does not produce hemorrhage in mice. Cleaves the peptide substrate Abz-LVEALYQ-EDDnp at the Ala-Leu bond in vitro. The sequence is that of Snake venom metalloproteinase ACLF (ACLPREF) from Agkistrodon contortrix laticinctus (Broad-banded copperhead).